A 201-amino-acid chain; its full sequence is Cutinase (201 aa).

The N-terminal stretch at 1 to 20 (MKTSAQQLLSLLLLPLSAIA) is a signal peptide. Residues Cys31 and Cys105 are joined by a disulfide bond. Ser116 serves as the catalytic Nucleophile. Cys164 and Cys171 are joined by a disulfide. Asp168 is a catalytic residue. Residue His181 is the Proton donor/acceptor of the active site.

It belongs to the cutinase family. The 2 disulfide bonds play a critical role in holding the catalytic residues in juxta-position; reduction of the disulfide bridges results in the complete inactivation of the enzyme.

The protein resides in the secreted. It carries out the reaction cutin + H2O = cutin monomers.. Catalyzes the hydrolysis of complex carboxylic polyesters found in the cell wall of plants. Degrades cutin, a macromolecule that forms the structure of the plant cuticle. Allows pathogenic fungi to penetrate through the cuticular barrier into the host plant during the initial stage of fungal infection. The protein is Cutinase (CUT1) of Monilinia fructicola (Brown rot fungus).